Here is a 284-residue protein sequence, read N- to C-terminus: 3-methyl-2-oxobutanoate hydroxymethyltransferase 2 (284 aa).

Positions 49 and 88 each coordinate Mg(2+). Residues 49–50, Asp-88, and Lys-118 contribute to the 3-methyl-2-oxobutanoate site; that span reads DS. Residue Glu-120 coordinates Mg(2+). Glu-187 (proton acceptor) is an active-site residue.

Belongs to the PanB family. In terms of assembly, homodecamer; pentamer of dimers. The cofactor is Mg(2+).

Its subcellular location is the cytoplasm. It carries out the reaction 3-methyl-2-oxobutanoate + (6R)-5,10-methylene-5,6,7,8-tetrahydrofolate + H2O = 2-dehydropantoate + (6S)-5,6,7,8-tetrahydrofolate. The protein operates within cofactor biosynthesis; (R)-pantothenate biosynthesis; (R)-pantoate from 3-methyl-2-oxobutanoate: step 1/2. Functionally, catalyzes the reversible reaction in which hydroxymethyl group from 5,10-methylenetetrahydrofolate is transferred onto alpha-ketoisovalerate to form ketopantoate. This chain is 3-methyl-2-oxobutanoate hydroxymethyltransferase 2, found in Burkholderia cenocepacia (strain HI2424).